Here is a 306-residue protein sequence, read N- to C-terminus: NAD-dependent protein deacylase (306 aa).

The Deacetylase sirtuin-type domain maps to 1–305 (MNKQLKEFQE…PIALKPLIGD (305 aa)). 23–42 (GAGLSASSGLPTFRGSQGLW) is a binding site for NAD(+). Residues Tyr-67 and Arg-70 each coordinate substrate. Residue 103 to 106 (QNVD) participates in NAD(+) binding. The active-site Proton acceptor is His-123. Zn(2+) contacts are provided by Cys-131, Cys-136, Cys-200, and Cys-203. Residues 243–245 (GTS), 269–271 (NTD), and Ala-291 each bind NAD(+).

This sequence belongs to the sirtuin family. Class III subfamily. Zn(2+) serves as cofactor.

It is found in the mitochondrion. It catalyses the reaction N(6)-malonyl-L-lysyl-[protein] + NAD(+) + H2O = 2''-O-malonyl-ADP-D-ribose + nicotinamide + L-lysyl-[protein]. It carries out the reaction N(6)-succinyl-L-lysyl-[protein] + NAD(+) + H2O = 2''-O-succinyl-ADP-D-ribose + nicotinamide + L-lysyl-[protein]. The catalysed reaction is N(6)-glutaryl-L-lysyl-[protein] + NAD(+) + H2O = 2''-O-glutaryl-ADP-D-ribose + nicotinamide + L-lysyl-[protein]. Its function is as follows. NAD-dependent lysine demalonylase, desuccinylase and deglutarylase that specifically removes malonyl, succinyl and glutaryl groups on target proteins. Has weak NAD-dependent protein deacetylase activity; however this activity may not be physiologically relevant in vivo. This is NAD-dependent protein deacylase from Candida albicans (strain SC5314 / ATCC MYA-2876) (Yeast).